We begin with the raw amino-acid sequence, 224 residues long: UPF0758 protein Bpro_0948 (224 aa).

The MPN domain maps to 102-224; that stretch reads LFSTPQAVRD…AVSMAELGLL (123 aa). 3 residues coordinate Zn(2+): His-173, His-175, and Asp-186. Positions 173–186 match the JAMM motif motif; the sequence is HNHPSGAATPSRAD.

Belongs to the UPF0758 family.

The chain is UPF0758 protein Bpro_0948 from Polaromonas sp. (strain JS666 / ATCC BAA-500).